A 464-amino-acid chain; its full sequence is L-cystine uptake protein TcyP (464 aa).

Helical transmembrane passes span 3–23, 34–54, 73–93, 107–127, 184–204, 225–245, 263–283, 347–367, 371–391, and 395–415; these read TLLV…LYYM, VFTA…IYEP, YVKL…ISAF, GLII…GIAA, PTST…FIGV, IVMR…LALM, FVLA…LLIA, AGIY…IDPL, FILT…GVGG, and FAAL…ALVI.

This sequence belongs to the dicarboxylate/amino acid:cation symporter (DAACS) (TC 2.A.23) family.

It is found in the membrane. Functionally, mediates uptake of L-cystine, the oxidized form of L-cysteine. In Bacillus thuringiensis subsp. konkukian (strain 97-27), this protein is L-cystine uptake protein TcyP.